Reading from the N-terminus, the 72-residue chain is Small ribosomal subunit protein bS18 (72 aa).

Belongs to the bacterial ribosomal protein bS18 family. Part of the 30S ribosomal subunit. Forms a tight heterodimer with protein bS6.

Binds as a heterodimer with protein bS6 to the central domain of the 16S rRNA, where it helps stabilize the platform of the 30S subunit. The protein is Small ribosomal subunit protein bS18 of Fusobacterium nucleatum subsp. nucleatum (strain ATCC 25586 / DSM 15643 / BCRC 10681 / CIP 101130 / JCM 8532 / KCTC 2640 / LMG 13131 / VPI 4355).